Reading from the N-terminus, the 310-residue chain is 4-hydroxy-3-methylbut-2-enyl diphosphate reductase (310 aa).

Residue C12 coordinates [4Fe-4S] cluster. 2 residues coordinate (2E)-4-hydroxy-3-methylbut-2-enyl diphosphate: H41 and H74. The dimethylallyl diphosphate site is built by H41 and H74. Residues H41 and H74 each coordinate isopentenyl diphosphate. Residue C96 participates in [4Fe-4S] cluster binding. Position 124 (H124) interacts with (2E)-4-hydroxy-3-methylbut-2-enyl diphosphate. H124 serves as a coordination point for dimethylallyl diphosphate. Position 124 (H124) interacts with isopentenyl diphosphate. The Proton donor role is filled by E126. T167 is a (2E)-4-hydroxy-3-methylbut-2-enyl diphosphate binding site. Residue C197 coordinates [4Fe-4S] cluster. (2E)-4-hydroxy-3-methylbut-2-enyl diphosphate contacts are provided by S225, S226, N227, and S269. The dimethylallyl diphosphate site is built by S225, S226, N227, and S269. Positions 225, 226, 227, and 269 each coordinate isopentenyl diphosphate.

Belongs to the IspH family. Requires [4Fe-4S] cluster as cofactor.

The enzyme catalyses isopentenyl diphosphate + 2 oxidized [2Fe-2S]-[ferredoxin] + H2O = (2E)-4-hydroxy-3-methylbut-2-enyl diphosphate + 2 reduced [2Fe-2S]-[ferredoxin] + 2 H(+). The catalysed reaction is dimethylallyl diphosphate + 2 oxidized [2Fe-2S]-[ferredoxin] + H2O = (2E)-4-hydroxy-3-methylbut-2-enyl diphosphate + 2 reduced [2Fe-2S]-[ferredoxin] + 2 H(+). The protein operates within isoprenoid biosynthesis; dimethylallyl diphosphate biosynthesis; dimethylallyl diphosphate from (2E)-4-hydroxy-3-methylbutenyl diphosphate: step 1/1. It participates in isoprenoid biosynthesis; isopentenyl diphosphate biosynthesis via DXP pathway; isopentenyl diphosphate from 1-deoxy-D-xylulose 5-phosphate: step 6/6. Functionally, catalyzes the conversion of 1-hydroxy-2-methyl-2-(E)-butenyl 4-diphosphate (HMBPP) into a mixture of isopentenyl diphosphate (IPP) and dimethylallyl diphosphate (DMAPP). Acts in the terminal step of the DOXP/MEP pathway for isoprenoid precursor biosynthesis. The chain is 4-hydroxy-3-methylbut-2-enyl diphosphate reductase from Tolumonas auensis (strain DSM 9187 / NBRC 110442 / TA 4).